Consider the following 368-residue polypeptide: Mitogen-activated protein kinase KSS1 (368 aa).

Residues 13 to 313 (YKLVDLIGEG…AAEALRHPYL (301 aa)) form the Protein kinase domain. ATP contacts are provided by residues 19–27 (IGEGAYGTV) and K42. The Proton acceptor role is filled by D143. The residue at position 183 (T183) is a Phosphothreonine. Positions 183-185 (TEY) match the TXY motif. Position 185 is a phosphotyrosine (Y185).

It belongs to the protein kinase superfamily. Ser/Thr protein kinase family. MAP kinase subfamily. HOG1 sub-subfamily. As to quaternary structure, in the nucleus, KSS1 forms a complex with DIG1, DIG2 and STE12; in contrast to FUS3 the interaction of KSS1 with STE12 does not depend on DIG1 and DIG2. Phosphorylated KSS1 shows reduced interaction with STE12. During pheromone activation and phosphorylation, KSS1 forms a membrane-associated complex with the scaffold protein STE5, the MAPKK STE7, the MAPKKK STE11, and the G-protein beta subunit GBB/STE4; interacting directly with POF1, STE7 and STE5 proteins. Mg(2+) serves as cofactor. In terms of processing, dually phosphorylated on Thr-183 and Tyr-185 by STE7 in response to pheromone or carbon/nitrogen limitation, which activates the enzyme. Activated FUS3 down-regulates KSS1 phosphorylation.

It is found in the nucleus. It localises to the cytoplasm. Its subcellular location is the periplasm. The enzyme catalyses L-seryl-[protein] + ATP = O-phospho-L-seryl-[protein] + ADP + H(+). The catalysed reaction is L-threonyl-[protein] + ATP = O-phospho-L-threonyl-[protein] + ADP + H(+). With respect to regulation, activated by tyrosine and threonine phosphorylation after pheromone treatment or carbon/nitrogen limitation. Its function is as follows. Together with closely related FUS3, KSS1 is the final kinase in the signal transduction cascade regulating activation/repression of the mating and filamentation pathways, induced by pheromone and nitrogen/carbon limitation, respectively. Phosphorylated KSS1 activates both pathways, whereas activated FUS3 activates the mating but suppresses the filamentation pathway. KSS1 activity is down-regulated by FUS3 during pheromone induction to prevent inappropriate activation of the filamentation pathway. During induction of filamentation, KSS1 activates the transcription factor STE12 resulting in its binding to and activation of filamentation specific genes. Non-activated KSS1 has a kinase-independent repressive effect on STE12 transcriptional activity, that is mediated by direct binding to STE12 and depends on the presence of DIG1 and DIG2, and that is required for the suppression of filamentation under normal growth conditions. SSN3/SRB10 contributes further to the suppression of filamentation under these conditions by reducing STE12 stability independent of KSS1. FUS3 can partially compensate for the lack of KSS1 but filamentation becomes constitutively induced at a low level in the absence of any signal. KSS1 phosphorylates STE7, STE5, FAR1, DIG1, DIG2, STE12, and SST2. The chain is Mitogen-activated protein kinase KSS1 (KSS1) from Saccharomyces cerevisiae (strain ATCC 204508 / S288c) (Baker's yeast).